Here is a 537-residue protein sequence, read N- to C-terminus: NAD(P)H-quinone oxidoreductase chain 4 3 (537 aa).

13 consecutive transmembrane segments (helical) span residues phenylalanine 6–isoleucine 26, tryptophan 36–tyrosine 56, leucine 87–tryptophan 107, leucine 115–aspartate 135, leucine 136–isoleucine 156, phenylalanine 169–phenylalanine 189, alanine 209–phenylalanine 229, serine 243–isoleucine 263, phenylalanine 277–phenylalanine 297, methionine 314–leucine 334, glutamine 335–glutamate 355, leucine 387–threonine 407, and valine 417–leucine 437.

The protein belongs to the complex I subunit 4 family.

It localises to the cellular thylakoid membrane. The enzyme catalyses a plastoquinone + NADH + (n+1) H(+)(in) = a plastoquinol + NAD(+) + n H(+)(out). It carries out the reaction a plastoquinone + NADPH + (n+1) H(+)(in) = a plastoquinol + NADP(+) + n H(+)(out). Its function is as follows. NDH-1 shuttles electrons from NAD(P)H, via FMN and iron-sulfur (Fe-S) centers, to quinones in the respiratory chain. The immediate electron acceptor for the enzyme in this species is believed to be plastoquinone. Couples the redox reaction to proton translocation (for every two electrons transferred, four hydrogen ions are translocated across the cytoplasmic membrane), and thus conserves the redox energy in a proton gradient. This chain is NAD(P)H-quinone oxidoreductase chain 4 3, found in Trichormus variabilis (strain ATCC 29413 / PCC 7937) (Anabaena variabilis).